Consider the following 369-residue polypeptide: Anhydro-N-acetylmuramic acid kinase (369 aa).

Residue 12 to 19 (GTSLDGVD) coordinates ATP.

Belongs to the anhydro-N-acetylmuramic acid kinase family.

It carries out the reaction 1,6-anhydro-N-acetyl-beta-muramate + ATP + H2O = N-acetyl-D-muramate 6-phosphate + ADP + H(+). The protein operates within amino-sugar metabolism; 1,6-anhydro-N-acetylmuramate degradation. Its pathway is cell wall biogenesis; peptidoglycan recycling. Functionally, catalyzes the specific phosphorylation of 1,6-anhydro-N-acetylmuramic acid (anhMurNAc) with the simultaneous cleavage of the 1,6-anhydro ring, generating MurNAc-6-P. Is required for the utilization of anhMurNAc either imported from the medium or derived from its own cell wall murein, and thus plays a role in cell wall recycling. The protein is Anhydro-N-acetylmuramic acid kinase of Escherichia coli O7:K1 (strain IAI39 / ExPEC).